The sequence spans 93 residues: MPRSLKKGPFVDKDLMKKVDAAIANNDRRVLKTWSRRSTILPEMVGLTFAVHNGKKFLPVFITENMVGHKLGEFSPTRTFYGHAGDKKTKAKK.

It belongs to the universal ribosomal protein uS19 family.

In terms of biological role, protein S19 forms a complex with S13 that binds strongly to the 16S ribosomal RNA. In Lawsonia intracellularis (strain PHE/MN1-00), this protein is Small ribosomal subunit protein uS19.